Consider the following 235-residue polypeptide: Octanoyltransferase (235 aa).

The BPL/LPL catalytic domain occupies 44–231; it reads DTTADELWLV…HQVGLPNENN (188 aa). Residues 83 to 90, 150 to 152, and 163 to 165 each bind substrate; these read RGGQVTYH, SLG, and GLA. Residue Cys181 is the Acyl-thioester intermediate of the active site.

This sequence belongs to the LipB family.

The protein resides in the cytoplasm. The catalysed reaction is octanoyl-[ACP] + L-lysyl-[protein] = N(6)-octanoyl-L-lysyl-[protein] + holo-[ACP] + H(+). Its pathway is protein modification; protein lipoylation via endogenous pathway; protein N(6)-(lipoyl)lysine from octanoyl-[acyl-carrier-protein]: step 1/2. In terms of biological role, catalyzes the transfer of endogenously produced octanoic acid from octanoyl-acyl-carrier-protein onto the lipoyl domains of lipoate-dependent enzymes. Lipoyl-ACP can also act as a substrate although octanoyl-ACP is likely to be the physiological substrate. This Colwellia psychrerythraea (strain 34H / ATCC BAA-681) (Vibrio psychroerythus) protein is Octanoyltransferase.